Reading from the N-terminus, the 249-residue chain is Triosephosphate isomerase (249 aa).

Substrate contacts are provided by N10 and K12. H94 acts as the Electrophile in catalysis. The Proton acceptor role is filled by E166.

This sequence belongs to the triosephosphate isomerase family. Homodimer.

The catalysed reaction is D-glyceraldehyde 3-phosphate = dihydroxyacetone phosphate. It functions in the pathway carbohydrate biosynthesis; gluconeogenesis. The protein operates within carbohydrate degradation; glycolysis; D-glyceraldehyde 3-phosphate from glycerone phosphate: step 1/1. The sequence is that of Triosephosphate isomerase (tpiA) from Emericella nidulans (strain FGSC A4 / ATCC 38163 / CBS 112.46 / NRRL 194 / M139) (Aspergillus nidulans).